Here is a 269-residue protein sequence, read N- to C-terminus: NAD-capped RNA hydrolase NudC (269 aa).

R81 contacts substrate. Residues C110, C113, C128, and C131 each coordinate Zn(2+). Residue Y136 coordinates substrate. A Nudix hydrolase domain is found at 137–260 (PRIFPCIIVA…TIARALIEQT (124 aa)). 3 residues coordinate a divalent metal cation: A170, E186, and E190. The Nudix box motif lies at 171-192 (GFVEVGETLEQCVAREVLEETG). Residue 204–211 (QPWAFPSS) coordinates substrate. E231 provides a ligand contact to a divalent metal cation. A253 is a substrate binding site.

It belongs to the Nudix hydrolase family. NudC subfamily. As to quaternary structure, homodimer. The cofactor is Mg(2+). Mn(2+) serves as cofactor. It depends on Zn(2+) as a cofactor.

The catalysed reaction is a 5'-end NAD(+)-phospho-ribonucleoside in mRNA + H2O = a 5'-end phospho-adenosine-phospho-ribonucleoside in mRNA + beta-nicotinamide D-ribonucleotide + 2 H(+). The enzyme catalyses NAD(+) + H2O = beta-nicotinamide D-ribonucleotide + AMP + 2 H(+). It carries out the reaction NADH + H2O = reduced beta-nicotinamide D-ribonucleotide + AMP + 2 H(+). In terms of biological role, mRNA decapping enzyme that specifically removes the nicotinamide adenine dinucleotide (NAD) cap from a subset of mRNAs by hydrolyzing the diphosphate linkage to produce nicotinamide mononucleotide (NMN) and 5' monophosphate mRNA. The NAD-cap is present at the 5'-end of some mRNAs and stabilizes RNA against 5'-processing. Has preference for mRNAs with a 5'-end purine. Catalyzes the hydrolysis of a broad range of dinucleotide pyrophosphates. The sequence is that of NAD-capped RNA hydrolase NudC from Vibrio cholerae serotype O1 (strain ATCC 39315 / El Tor Inaba N16961).